Here is a 122-residue protein sequence, read N- to C-terminus: Large ribosomal subunit protein bL12 (122 aa).

It belongs to the bacterial ribosomal protein bL12 family. Homodimer. Part of the ribosomal stalk of the 50S ribosomal subunit. Forms a multimeric L10(L12)X complex, where L10 forms an elongated spine to which 2 to 4 L12 dimers bind in a sequential fashion. Binds GTP-bound translation factors.

Its function is as follows. Forms part of the ribosomal stalk which helps the ribosome interact with GTP-bound translation factors. Is thus essential for accurate translation. This chain is Large ribosomal subunit protein bL12, found in Xylella fastidiosa (strain M23).